The primary structure comprises 622 residues: Low affinity potassium transport system protein Kup (622 aa).

12 helical membrane passes run 9–29, 49–69, 103–123, 137–157, 165–185, 213–233, 247–267, 276–296, 337–357, 363–383, 396–416, and 419–439; these read LPAI…TSPL, VFGF…IKYL, VIMG…TPAI, PQLD…LFMI, VGKL…VLGL, VSFI…ALYA, WFTV…ALLL, PFFL…AALA, IYIP…IVSF, LAAA…ILST, FVAL…SANL, and LLSG…IMTT.

The protein belongs to the HAK/KUP transporter (TC 2.A.72) family.

The protein localises to the cell inner membrane. The enzyme catalyses K(+)(in) + H(+)(in) = K(+)(out) + H(+)(out). Its function is as follows. Responsible for the low-affinity transport of potassium into the cell. Likely operates as a K(+):H(+) symporter. In Salmonella typhi, this protein is Low affinity potassium transport system protein Kup.